The primary structure comprises 154 residues: tRNA-splicing endonuclease (154 aa).

Catalysis depends on residues Y86, H102, and K133.

This sequence belongs to the tRNA-intron endonuclease family. Archaeal short subfamily. In terms of assembly, homotetramer; although the tetramer contains four active sites, only two participate in the cleavage. Therefore, it should be considered as a dimer of dimers.

The enzyme catalyses pretRNA = a 3'-half-tRNA molecule with a 5'-OH end + a 5'-half-tRNA molecule with a 2',3'-cyclic phosphate end + an intron with a 2',3'-cyclic phosphate and a 5'-hydroxyl terminus.. Functionally, endonuclease that removes tRNA introns. Cleaves pre-tRNA at the 5'- and 3'-splice sites to release the intron. The products are an intron and two tRNA half-molecules bearing 2',3' cyclic phosphate and 5'-OH termini. Recognizes a pseudosymmetric substrate in which 2 bulged loops of 3 bases are separated by a stem of 4 bp. The polypeptide is tRNA-splicing endonuclease (Nanoarchaeum equitans (strain Kin4-M)).